The following is a 181-amino-acid chain: Extracellular superoxide dismutase [Cu-Zn] (181 aa).

The signal sequence occupies residues 1–18 (MMQYLVVSLALCATICSA). N-linked (GlcNAc...) asparagine glycosylation occurs at Asn-46. Cu cation contacts are provided by His-75, His-77, and His-92. Cys-86 and Cys-175 are disulfide-bonded. Residues His-92, His-100, His-109, and Asp-112 each coordinate Zn(2+). Asn-119 carries N-linked (GlcNAc...) asparagine glycosylation. Cu cation is bound at residue His-149. An N-linked (GlcNAc...) asparagine glycan is attached at Asn-159.

This sequence belongs to the Cu-Zn superoxide dismutase family. It depends on Cu cation as a cofactor. Zn(2+) serves as cofactor. In terms of tissue distribution, expressed at higher levels in females compared to males.

Its subcellular location is the secreted. The catalysed reaction is 2 superoxide + 2 H(+) = H2O2 + O2. Its function is as follows. Protects the extracellular space from the toxic effects of reactive oxygen intermediates by converting superoxide radicals into hydrogen peroxide and oxygen. The polypeptide is Extracellular superoxide dismutase [Cu-Zn] (Drosophila melanogaster (Fruit fly)).